The sequence spans 143 residues: UPF0179 protein PTO0851 (143 aa).

This sequence belongs to the UPF0179 family.

The chain is UPF0179 protein PTO0851 from Picrophilus torridus (strain ATCC 700027 / DSM 9790 / JCM 10055 / NBRC 100828 / KAW 2/3).